The primary structure comprises 544 residues: Formate--tetrahydrofolate ligase (544 aa).

63–70 (TPAGEGKS) contributes to the ATP binding site.

It belongs to the formate--tetrahydrofolate ligase family.

It catalyses the reaction (6S)-5,6,7,8-tetrahydrofolate + formate + ATP = (6R)-10-formyltetrahydrofolate + ADP + phosphate. It participates in one-carbon metabolism; tetrahydrofolate interconversion. This is Formate--tetrahydrofolate ligase from Fusobacterium nucleatum subsp. nucleatum (strain ATCC 25586 / DSM 15643 / BCRC 10681 / CIP 101130 / JCM 8532 / KCTC 2640 / LMG 13131 / VPI 4355).